The sequence spans 485 residues: Mitochondrial metalloendopeptidase OMA1 (485 aa).

A mitochondrion-targeting transit peptide spans 1 to 16 (MKPSLKRRLLLLSRKF). Topologically, residues 17-147 (AKASIRKLLR…GPGRWFQNPR (131 aa)) are mitochondrial matrix. Residues 148-168 (TVFTVVLVGSVGLITLIVGNT) traverse the membrane as a helical segment. Residues 169–485 (ETIPYTKRTH…AGRTGVEGFL (317 aa)) lie on the Mitochondrial intermembrane side of the membrane. H352 contacts Zn(2+). E353 is a catalytic residue. The Zn(2+) site is built by H356 and E405. The segment at 456–485 (KLLAQANVMEEALMIYREVQAGRTGVEGFL) is required for protease activation.

This sequence belongs to the peptidase M48A family. In terms of assembly, homooligomer. Requires Zn(2+) as cofactor.

It is found in the mitochondrion inner membrane. Functionally, protease that is part of the quality control system in the inner membrane of mitochondria. Metalloendopeptidase that modulates the oxidative phosphorylation (OXPHOS) system and plant growth. Involved in tolerance mechanisms to heat, osmotic and oxidative stresses. This Arabidopsis thaliana (Mouse-ear cress) protein is Mitochondrial metalloendopeptidase OMA1.